Reading from the N-terminus, the 431-residue chain is Beta-lactamase hydrolase-like protein (431 aa).

Residues His212, His214, and His286 each contribute to the Zn(2+) site. Asp309 lines the substrate pocket.

It belongs to the metallo-beta-lactamase superfamily. Zn(2+) is required as a cofactor.

Could play a role in cell adherence or biofilm development. In Agrobacterium fabrum (strain C58 / ATCC 33970) (Agrobacterium tumefaciens (strain C58)), this protein is Beta-lactamase hydrolase-like protein.